Reading from the N-terminus, the 116-residue chain is Large ribosomal subunit protein eL30 (116 aa).

It belongs to the eukaryotic ribosomal protein eL30 family. Component of the large ribosomal subunit.

Its subcellular location is the cytoplasm. Its function is as follows. Component of the large ribosomal subunit. The ribosome is a large ribonucleoprotein complex responsible for the synthesis of proteins in the cell. The chain is Large ribosomal subunit protein eL30 (rpl30) from Ictalurus punctatus (Channel catfish).